We begin with the raw amino-acid sequence, 422 residues long: F-box/kelch-repeat protein At3g27150 (422 aa).

One can recognise an F-box domain in the interval 68–114 (LLNVPQLVYELEVEILARVPRFEYWKLKLLNKGFSRLLKSDEIFKVR). Kelch repeat units follow at residues 162 to 212 (ESLC…TCGT), 213 to 264 (VVFV…YLRG), 266 to 312 (FYVL…SPPL), 314 to 361 (AVVG…VAFK), and 366 to 412 (KLLV…RFNH).

The sequence is that of F-box/kelch-repeat protein At3g27150 from Arabidopsis thaliana (Mouse-ear cress).